Reading from the N-terminus, the 90-residue chain is UPF0335 protein R02793 (90 aa).

Belongs to the UPF0335 family.

The sequence is that of UPF0335 protein R02793 from Rhizobium meliloti (strain 1021) (Ensifer meliloti).